The following is a 223-amino-acid chain: Sigma non-opioid intracellular receptor 1 (223 aa).

The Lumenal segment spans residues 1–9 (MQWAVGRRW). Residues 2 to 8 (QWAVGRR) are targeting to endoplasmic reticulum-associated lipid droplets. The chain crosses the membrane as a helical span at residues 10–30 (AWAALLLAVAAVLTQVVWLWL). Over 31-223 (GTQSFVFQRE…LTTYLFGQDP (193 aa)) the chain is Cytoplasmic. The tract at residues 99–106 (SLSEYVLL) is important for ligand-binding. The interval 177-223 (VIPSTLAFALADTVFSTQDFLTLFYTLRSYARGLRLELTTYLFGQDP) is C-terminal hydrophobic region.

The protein belongs to the ERG2 family. Homotrimer. Forms a ternary complex with ANK2 and ITPR3. The complex is disrupted by agonists. Interacts with KCNA4. Interacts with KCNA2; cocaine consumption leads to increased interaction. Interacts with RNF112 in an oxidative stress-regulated manner. In terms of tissue distribution, widely expressed with higher expression in liver, colon, prostate, placenta, small intestine, heart and pancreas. Expressed in the retina by retinal pigment epithelial cells. Expressed in alpha-motor neurons.

The protein localises to the nucleus inner membrane. Its subcellular location is the nucleus outer membrane. It localises to the nucleus envelope. It is found in the cytoplasmic vesicle. The protein resides in the endoplasmic reticulum membrane. The protein localises to the membrane. Its subcellular location is the lipid droplet. It localises to the cell junction. It is found in the cell membrane. The protein resides in the cell projection. The protein localises to the growth cone. Its subcellular location is the postsynaptic density membrane. In terms of biological role, functions in lipid transport from the endoplasmic reticulum and is involved in a wide array of cellular functions probably through regulation of the biogenesis of lipid microdomains at the plasma membrane. Involved in the regulation of different receptors it plays a role in BDNF signaling and EGF signaling. Also regulates ion channels like the potassium channel and could modulate neurotransmitter release. Plays a role in calcium signaling through modulation together with ANK2 of the ITP3R-dependent calcium efflux at the endoplasmic reticulum. Plays a role in several other cell functions including proliferation, survival and death. Originally identified for its ability to bind various psychoactive drugs it is involved in learning processes, memory and mood alteration. Necessary for proper mitochondrial axonal transport in motor neurons, in particular the retrograde movement of mitochondria. Plays a role in protecting cells against oxidative stress-induced cell death via its interaction with RNF112. The chain is Sigma non-opioid intracellular receptor 1 (SIGMAR1) from Homo sapiens (Human).